The following is a 138-amino-acid chain: MNISDVAKKTGLTSKAIRFYEEKGLVTPPLRSENGYRTYTQKHLNELTLLRQARQVGFNLEECGELVNLFNDPRRHSADVKKRTLEKVAEIERHISELQSMRDQLLALAESCPGDDSADCPIIDNLSGCCHHKAQKPR.

Residues 1–69 form the HTH merR-type domain; sequence MNISDVAKKT…LEECGELVNL (69 aa). The segment at residues 4-23 is a DNA-binding region (H-T-H motif); the sequence is SDVAKKTGLTSKAIRFYEEK. The Cu(+) site is built by Cys-112 and Cys-120.

Homodimer.

It is found in the cytoplasm. Its function is as follows. Regulates the transcription of the copA and cuiD (cueO) genes. Detects cytoplasmic copper stress and activates transcription in response to increasing copper concentrations. This Salmonella typhimurium (strain LT2 / SGSC1412 / ATCC 700720) protein is HTH-type transcriptional regulator CueR (cueR).